Consider the following 325-residue polypeptide: 4-hydroxy-3-methylbut-2-enyl diphosphate reductase (325 aa).

Cys13 is a [4Fe-4S] cluster binding site. (2E)-4-hydroxy-3-methylbut-2-enyl diphosphate-binding residues include His42 and His76. Residues His42 and His76 each coordinate dimethylallyl diphosphate. 2 residues coordinate isopentenyl diphosphate: His42 and His76. Residue Cys98 participates in [4Fe-4S] cluster binding. Position 126 (His126) interacts with (2E)-4-hydroxy-3-methylbut-2-enyl diphosphate. Dimethylallyl diphosphate is bound at residue His126. Residue His126 coordinates isopentenyl diphosphate. The Proton donor role is filled by Glu128. Thr169 provides a ligand contact to (2E)-4-hydroxy-3-methylbut-2-enyl diphosphate. Cys230 contacts [4Fe-4S] cluster. The (2E)-4-hydroxy-3-methylbut-2-enyl diphosphate site is built by Ser258, Ser259, Asn260, and Ser306. Ser258, Ser259, Asn260, and Ser306 together coordinate dimethylallyl diphosphate. Residues Ser258, Ser259, Asn260, and Ser306 each coordinate isopentenyl diphosphate.

The protein belongs to the IspH family. The cofactor is [4Fe-4S] cluster.

It catalyses the reaction isopentenyl diphosphate + 2 oxidized [2Fe-2S]-[ferredoxin] + H2O = (2E)-4-hydroxy-3-methylbut-2-enyl diphosphate + 2 reduced [2Fe-2S]-[ferredoxin] + 2 H(+). The catalysed reaction is dimethylallyl diphosphate + 2 oxidized [2Fe-2S]-[ferredoxin] + H2O = (2E)-4-hydroxy-3-methylbut-2-enyl diphosphate + 2 reduced [2Fe-2S]-[ferredoxin] + 2 H(+). The protein operates within isoprenoid biosynthesis; dimethylallyl diphosphate biosynthesis; dimethylallyl diphosphate from (2E)-4-hydroxy-3-methylbutenyl diphosphate: step 1/1. It participates in isoprenoid biosynthesis; isopentenyl diphosphate biosynthesis via DXP pathway; isopentenyl diphosphate from 1-deoxy-D-xylulose 5-phosphate: step 6/6. Catalyzes the conversion of 1-hydroxy-2-methyl-2-(E)-butenyl 4-diphosphate (HMBPP) into a mixture of isopentenyl diphosphate (IPP) and dimethylallyl diphosphate (DMAPP). Acts in the terminal step of the DOXP/MEP pathway for isoprenoid precursor biosynthesis. The protein is 4-hydroxy-3-methylbut-2-enyl diphosphate reductase of Chlorobium phaeobacteroides (strain BS1).